We begin with the raw amino-acid sequence, 86 residues long: DNA-directed RNA polymerase subunit omega (86 aa).

Basic and acidic residues predominate over residues 67-76; the sequence is SAREHAKESQ. The disordered stretch occupies residues 67 to 86; the sequence is SAREHAKESQVSEEEVREES. Over residues 77 to 86 the composition is skewed to acidic residues; that stretch reads VSEEEVREES.

The protein belongs to the RNA polymerase subunit omega family. As to quaternary structure, the RNAP catalytic core consists of 2 alpha, 1 beta, 1 beta' and 1 omega subunit. When a sigma factor is associated with the core the holoenzyme is formed, which can initiate transcription.

It catalyses the reaction RNA(n) + a ribonucleoside 5'-triphosphate = RNA(n+1) + diphosphate. Functionally, promotes RNA polymerase assembly. Latches the N- and C-terminal regions of the beta' subunit thereby facilitating its interaction with the beta and alpha subunits. This Nitrosococcus oceani (strain ATCC 19707 / BCRC 17464 / JCM 30415 / NCIMB 11848 / C-107) protein is DNA-directed RNA polymerase subunit omega.